Consider the following 418-residue polypeptide: ADP-ribose glycohydrolase MACROD2 (418 aa).

Residues 57–238 (PEEIQVKNSL…IYKRKLNEFF (182 aa)) enclose the Macro domain. Residues 75–77 (GDI), 88–90 (AAN), 95–100 (GGGGVD), 183–189 (ISTGIYG), and Phe-222 contribute to the substrate site. The interval 238–418 (FPKDGGDDEE…KDTNDDANEA (181 aa)) is disordered. Positions 250–262 (KGDSDEMKEDTEG) are enriched in basic and acidic residues. Positions 295 to 318 (TGNTQDMTAMSLETNEGNDVSSPA) are enriched in polar residues. The segment covering 321-360 (PLKEGEELSEAKITGEKISVEPKTPEPEDAKMTVEEKSQE) has biased composition (basic and acidic residues). Acidic residues predominate over residues 377–389 (ETEDLDGDSEEPS).

The protein belongs to the MacroD-type family. MacroD1/2-like subfamily.

The protein resides in the nucleus. It carries out the reaction 2''-O-acetyl-ADP-D-ribose + H2O = ADP-D-ribose + acetate + H(+). The enzyme catalyses 4-O-(ADP-D-ribosyl)-L-aspartyl-[protein] + H2O = L-aspartyl-[protein] + ADP-D-ribose + H(+). It catalyses the reaction 5-O-(ADP-D-ribosyl)-L-glutamyl-[protein] + H2O = L-glutamyl-[protein] + ADP-D-ribose + H(+). The catalysed reaction is alpha-NAD(+) + H2O = ADP-D-ribose + nicotinamide + H(+). Its activity is regulated as follows. Subject to product inhibition by ADP-ribose. Functionally, removes ADP-ribose from aspartate and glutamate residues in proteins bearing a single ADP-ribose moiety. Inactive towards proteins bearing poly-ADP-ribose. Deacetylates O-acetyl-ADP ribose, a signaling molecule generated by the deacetylation of acetylated lysine residues in histones and other proteins. This is ADP-ribose glycohydrolase MACROD2 from Xenopus laevis (African clawed frog).